The sequence spans 658 residues: Threonine--tRNA ligase (658 aa).

Positions 1 to 61 constitute a TGS domain; it reads MSDVRVIIQR…KDGEEVEPVQ (61 aa). The tract at residues 259–554 is catalytic; sequence DHRKLGNELD…LLEHYAGAFP (296 aa). Residues Cys353, His404, and His531 each coordinate Zn(2+).

It belongs to the class-II aminoacyl-tRNA synthetase family. As to quaternary structure, homodimer. It depends on Zn(2+) as a cofactor.

The protein localises to the cytoplasm. The catalysed reaction is tRNA(Thr) + L-threonine + ATP = L-threonyl-tRNA(Thr) + AMP + diphosphate + H(+). Functionally, catalyzes the attachment of threonine to tRNA(Thr) in a two-step reaction: L-threonine is first activated by ATP to form Thr-AMP and then transferred to the acceptor end of tRNA(Thr). Also edits incorrectly charged L-seryl-tRNA(Thr). This Streptomyces avermitilis (strain ATCC 31267 / DSM 46492 / JCM 5070 / NBRC 14893 / NCIMB 12804 / NRRL 8165 / MA-4680) protein is Threonine--tRNA ligase.